The primary structure comprises 1536 residues: MNRSLLLRLSDTGEPITSCSYGKGVLTLPPIPLPKDAPKDQPLYTVKLLVSAGSPVARDGLVWTNCPPDHNTPFKRDKFYKKIIHSSFHEDDCIDLNVYAPGSYCFYLSFRNDNEKLETTRKYYFVALPMLYINDQFLPLNSIALQSVVSKWLGSDWEPILSKIAAKNYNMVHFTPLQERGESNSPYSIYDQLQFDQEHFKSPEDVKNLVEHIHRDLNMLSLTDIVFNHTANNSPWLVEHPEAGYNHITAPHLISAIELDQELLNFSRNLKSWGYPTELKNIEDLFKIMDGIKVHVLGSLKLWEYYAVNVQTALRDIKAHWNDESNESYSFPENIKDISSDFVKLASFVKDNVTEPNFGTLGERNSNRINVPKFIQLLKLINDGGSDDSESSLATAQNILNEVNLPLYREYDDDVSEILEQLFNRIKYLRLDDGGPKQGPVTVDVPLTEPYFTRFKGKDGTDYALANNGWIWNGNPLVDFASQNSRAYLRREVIVWGDCVKLRYGKSPEDSPYLWERMSKYIEMNAKIFDGFRIDNCHSTPIHVGEYFLDLARKYNPNLYVVAELFSGSETLDCLFVERLGISSLIREAMQAWSEEELSRLVHKHGGRPIGSYKFVPMDDFSYPADINLNEEHCFNDSNDNSIRCVSEIMIPKILTATPPHALFMDCTHDNETPFEKRTVEDTLPNAALVALCSSAIGSVYGYDEIFPHLLNLVTEKRHYDISTPTGSPSIGITKVKATLNSIRTSIGEKAYDIEDSEMHVHHQGQYITFHRMDVKSGKGWYLIARMKFSDNDDPNETLPPVVLNQSTCSLRFSYALERVGDEIPNDDKFIKGIPTKLKELEGFDISYDDSKKISTIKLPNEFPQGSIAIFETQQNGVDESLDHFIRSGALKATSSLTLESINSVLYRSEPEEYDVSAGEGGAYIIPNFGKPVYCGLQGWVSVLRKIVFYNDLAHPLSANLRNGHWALDYTISRLNYYSDEAGINEVQNWLRSRFDRVKKLPSYLVPSYFALIIGILYGCCRLKAIQLMSRNIGKSTLFVQSLSMTSIQMVSRMKSTSILPGENVPSMAAGLPHFSVNYMRCWGRDVFISLRGMLLTTGRFDEAKAHILAFAKTLKHGLIPNLLDAGRNPRYNARDAAWFFLQAVQDYVYIVPDGEKILQEQVTRRFPLDDTYIPVDDPRAFSYSSTLEEIIYEILSRHAKGIKFREANAGPNLDRVMTDKGFNVEIHVDWSTGLIHGGSQYNCGTWMDKMGESEKAGSVGIPGTPRDGAAIEINGLLKSALRFVIELKNKGLFKFSDVETQDGGRIDFTEWNQLLQDNFEKRYYVPEDPSQDADYDVSAKLGVNRRGIYRDLYKSGKPYEDYQLRPNFAIAMTVAPELFVPEHAIKAITIADEVLRGPVGMRTLDPSDYNYRPYYNNGEDSDDFATSKGRNYHQGPEWVWLYGYFLRAFHHFHFKTSPRCQNAAKEKPSSYLYQQLYYRLKGHRKWIFESVWAGLTELTNKDGEVCNDSSPTQAWSSACLLDLFYDLWDAYEDDS.

Active-site residues include Asp535, His538, and Asp670.

This sequence belongs to the glycogen debranching enzyme family. As to quaternary structure, interacts with IGD1.

Its subcellular location is the mitochondrion. It localises to the cytoplasm. The catalysed reaction is Transfers a segment of a (1-&gt;4)-alpha-D-glucan to a new position in an acceptor, which may be glucose or a (1-&gt;4)-alpha-D-glucan.. It carries out the reaction Hydrolysis of (1-&gt;6)-alpha-D-glucosidic branch linkages in glycogen phosphorylase limit dextrin.. Activity is inhibited by IGD1. Functionally, multifunctional enzyme acting as 1,4-alpha-D-glucan:1,4-alpha-D-glucan 4-alpha-D-glycosyltransferase and amylo-1,6-glucosidase in glycogen degradation. The polypeptide is Glycogen debranching enzyme (GDB1) (Saccharomyces cerevisiae (strain ATCC 204508 / S288c) (Baker's yeast)).